The sequence spans 623 residues: Glutathione import ATP-binding protein GsiA (623 aa).

ABC transporter domains follow at residues 18–272 (VRNL…QGLL) and 317–567 (LQVS…RKLM). ATP is bound by residues 52–59 (GESGSGKS) and 360–367 (GESGCGKS).

The protein belongs to the ABC transporter superfamily. Glutathione importer (TC 3.A.1.5.11) family. The complex is composed of two ATP-binding proteins (GsiA), two transmembrane proteins (GsiC and GsiD) and a solute-binding protein (GsiB).

The protein resides in the cell inner membrane. The catalysed reaction is glutathione(out) + ATP + H2O = glutathione(in) + ADP + phosphate + H(+). Its function is as follows. Part of the ABC transporter complex GsiABCD involved in glutathione import. Responsible for energy coupling to the transport system. The chain is Glutathione import ATP-binding protein GsiA from Pectobacterium atrosepticum (strain SCRI 1043 / ATCC BAA-672) (Erwinia carotovora subsp. atroseptica).